The primary structure comprises 371 residues: O-antigen chain mannosyltransferase C (371 aa).

It belongs to the glycosyltransferase group 1 family. Glycosyltransferase 4 subfamily.

It catalyses the reaction N-acetyl-alpha-D-glucosaminyl-di-trans,octa-cis-undecaprenyl diphosphate + GDP-alpha-D-mannose = alpha-D-mannosyl-(1-&gt;3)-N-acetyl-alpha-D-glucosaminyl-di-trans,octa-cis-undecaprenyl diphosphate + GDP + H(+). The protein operates within bacterial outer membrane biogenesis; LPS O-antigen biosynthesis. In terms of biological role, mannosyltransferase involved in the biosynthesis of the repeat unit of the lipopolysaccharide (LPS) O-antigen region. Catalyzes the transfer of a single alpha-(1-&gt;3)-linked mannose residue to the acceptor N-acetyl-glucosaminyl-diphospho-undecaprenol during the synthesis of the adapter region. In Escherichia coli, this protein is O-antigen chain mannosyltransferase C.